The chain runs to 540 residues: CTP synthase (540 aa).

The amidoligase domain stretch occupies residues 1 to 267 (MTKYIFVTGG…DQKVCDFLHL (267 aa)). A CTP-binding site is contributed by Ser13. Residue Ser13 coordinates UTP. An ATP-binding site is contributed by 14–19 (SLGKGI). Tyr54 lines the L-glutamine pocket. Asp71 is an ATP binding site. The Mg(2+) site is built by Asp71 and Glu141. Residues 148 to 150 (DIE), 188 to 193 (KTKPTQ), and Lys224 contribute to the CTP site. Residues 188 to 193 (KTKPTQ) and Lys224 each bind UTP. The 244-residue stretch at 294–537 (TITLVGKYVE…IGAASGLPAQ (244 aa)) folds into the Glutamine amidotransferase type-1 domain. Gly356 lines the L-glutamine pocket. Cys383 acts as the Nucleophile; for glutamine hydrolysis in catalysis. L-glutamine-binding positions include 384-387 (LGMQ), Glu407, and Arg465. Residues His510 and Glu512 contribute to the active site.

This sequence belongs to the CTP synthase family. As to quaternary structure, homotetramer.

The enzyme catalyses UTP + L-glutamine + ATP + H2O = CTP + L-glutamate + ADP + phosphate + 2 H(+). The catalysed reaction is L-glutamine + H2O = L-glutamate + NH4(+). It carries out the reaction UTP + NH4(+) + ATP = CTP + ADP + phosphate + 2 H(+). It functions in the pathway pyrimidine metabolism; CTP biosynthesis via de novo pathway; CTP from UDP: step 2/2. Allosterically activated by GTP, when glutamine is the substrate; GTP has no effect on the reaction when ammonia is the substrate. The allosteric effector GTP functions by stabilizing the protein conformation that binds the tetrahedral intermediate(s) formed during glutamine hydrolysis. Inhibited by the product CTP, via allosteric rather than competitive inhibition. Its function is as follows. Catalyzes the ATP-dependent amination of UTP to CTP with either L-glutamine or ammonia as the source of nitrogen. Regulates intracellular CTP levels through interactions with the four ribonucleotide triphosphates. The protein is CTP synthase of Lactobacillus johnsonii (strain CNCM I-12250 / La1 / NCC 533).